Consider the following 688-residue polypeptide: Potassium-transporting ATPase ATP-binding subunit (688 aa).

4 helical membrane passes run 37–57 (FLVYISSILTTILYAVSLVGI), 65–85 (ILGITIILWLTVLFANFAEAI), 219–239 (IALQILLISLTIIFLLVTVSL), and 262–282 (VALLVCLAPTTIGALLSSIGI). The active-site 4-aspartylphosphate intermediate is aspartate 313. Residues aspartate 350, glutamate 354, 383 to 390 (FTAKTRMS), and lysine 401 contribute to the ATP site. Positions 524 and 528 each coordinate Mg(2+). 3 consecutive transmembrane segments (helical) span residues 594–614 (FAIIPALFIGLYPGLSALNIM), 622–642 (AIFSAIIYNALIIVALIPLAL), and 668–688 (IIVPFIAIKVIDVLITAIGIV).

The protein belongs to the cation transport ATPase (P-type) (TC 3.A.3) family. Type IA subfamily. In terms of assembly, the system is composed of three essential subunits: KdpA, KdpB and KdpC.

Its subcellular location is the cell membrane. The catalysed reaction is K(+)(out) + ATP + H2O = K(+)(in) + ADP + phosphate + H(+). Its function is as follows. Part of the high-affinity ATP-driven potassium transport (or Kdp) system, which catalyzes the hydrolysis of ATP coupled with the electrogenic transport of potassium into the cytoplasm. This subunit is responsible for energy coupling to the transport system and for the release of the potassium ions to the cytoplasm. The protein is Potassium-transporting ATPase ATP-binding subunit of Clostridium botulinum (strain Alaska E43 / Type E3).